The sequence spans 313 residues: ADP-L-glycero-D-manno-heptose-6-epimerase (313 aa).

NADP(+)-binding positions include 10 to 11 (MI), 31 to 32 (DN), K38, K53, 75 to 79 (EGACS), and N92. Residue Y139 is the Proton acceptor of the active site. Position 143 (K143) interacts with NADP(+). N174 serves as a coordination point for substrate. 2 residues coordinate NADP(+): V175 and K183. The active-site Proton acceptor is the K183. Substrate contacts are provided by residues S185, H192, 206–209 (FEGS), R214, and Y277.

It belongs to the NAD(P)-dependent epimerase/dehydratase family. HldD subfamily. As to quaternary structure, homopentamer. NADP(+) is required as a cofactor.

The enzyme catalyses ADP-D-glycero-beta-D-manno-heptose = ADP-L-glycero-beta-D-manno-heptose. It participates in nucleotide-sugar biosynthesis; ADP-L-glycero-beta-D-manno-heptose biosynthesis; ADP-L-glycero-beta-D-manno-heptose from D-glycero-beta-D-manno-heptose 7-phosphate: step 4/4. Catalyzes the interconversion between ADP-D-glycero-beta-D-manno-heptose and ADP-L-glycero-beta-D-manno-heptose via an epimerization at carbon 6 of the heptose. The sequence is that of ADP-L-glycero-D-manno-heptose-6-epimerase from Aliivibrio fischeri (strain MJ11) (Vibrio fischeri).